We begin with the raw amino-acid sequence, 87 residues long: Protein anon-73B1 (87 aa).

A helical transmembrane segment spans residues 25–47 (LLIRYGLYVGALFQFVCISAAVL). Residues 52–87 (PDVNSNPETGEVTEREGEPVRTRLHKIRKLEKKKRR) form a disordered region. Over residues 63-72 (VTEREGEPVR) the composition is skewed to basic and acidic residues. Residues 73-87 (TRLHKIRKLEKKKRR) show a composition bias toward basic residues.

It belongs to the UPF0239 family.

It localises to the membrane. The protein is Protein anon-73B1 of Drosophila erecta (Fruit fly).